A 265-amino-acid polypeptide reads, in one-letter code: tRNA pseudouridine synthase A (265 aa).

Asp-58 functions as the Nucleophile in the catalytic mechanism. A substrate-binding site is contributed by Tyr-116.

This sequence belongs to the tRNA pseudouridine synthase TruA family. As to quaternary structure, homodimer.

The catalysed reaction is uridine(38/39/40) in tRNA = pseudouridine(38/39/40) in tRNA. Formation of pseudouridine at positions 38, 39 and 40 in the anticodon stem and loop of transfer RNAs. The protein is tRNA pseudouridine synthase A of Neisseria meningitidis serogroup C / serotype 2a (strain ATCC 700532 / DSM 15464 / FAM18).